Reading from the N-terminus, the 366-residue chain is Aminomethyltransferase (366 aa).

This sequence belongs to the GcvT family. The glycine cleavage system is composed of four proteins: P, T, L and H.

The catalysed reaction is N(6)-[(R)-S(8)-aminomethyldihydrolipoyl]-L-lysyl-[protein] + (6S)-5,6,7,8-tetrahydrofolate = N(6)-[(R)-dihydrolipoyl]-L-lysyl-[protein] + (6R)-5,10-methylene-5,6,7,8-tetrahydrofolate + NH4(+). In terms of biological role, the glycine cleavage system catalyzes the degradation of glycine. This chain is Aminomethyltransferase, found in Bordetella parapertussis (strain 12822 / ATCC BAA-587 / NCTC 13253).